Reading from the N-terminus, the 498-residue chain is Glycerol kinase (498 aa).

Thr-12 is a binding site for ADP. Positions 12, 13, and 14 each coordinate ATP. Thr-12 serves as a coordination point for sn-glycerol 3-phosphate. Arg-16 contributes to the ADP binding site. Sn-glycerol 3-phosphate contacts are provided by Arg-82, Glu-83, Tyr-134, and Asp-244. The glycerol site is built by Arg-82, Glu-83, Tyr-134, Asp-244, and Gln-245. Positions 266 and 310 each coordinate ADP. Positions 266, 310, 314, and 411 each coordinate ATP. Residues Gly-411 and Asn-415 each coordinate ADP.

Belongs to the FGGY kinase family.

The enzyme catalyses glycerol + ATP = sn-glycerol 3-phosphate + ADP + H(+). It participates in polyol metabolism; glycerol degradation via glycerol kinase pathway; sn-glycerol 3-phosphate from glycerol: step 1/1. Its activity is regulated as follows. Inhibited by fructose 1,6-bisphosphate (FBP). Its function is as follows. Key enzyme in the regulation of glycerol uptake and metabolism. Catalyzes the phosphorylation of glycerol to yield sn-glycerol 3-phosphate. The sequence is that of Glycerol kinase from Roseiflexus sp. (strain RS-1).